A 331-amino-acid chain; its full sequence is Lipoyl synthase (331 aa).

7 residues coordinate [4Fe-4S] cluster: Cys-74, Cys-79, Cys-85, Cys-100, Cys-104, Cys-107, and Ser-314. The Radical SAM core domain maps to 85-303 (CFGKGTATFM…ETEAYKMGFT (219 aa)).

This sequence belongs to the radical SAM superfamily. Lipoyl synthase family. The cofactor is [4Fe-4S] cluster.

The protein resides in the cytoplasm. The catalysed reaction is [[Fe-S] cluster scaffold protein carrying a second [4Fe-4S](2+) cluster] + N(6)-octanoyl-L-lysyl-[protein] + 2 oxidized [2Fe-2S]-[ferredoxin] + 2 S-adenosyl-L-methionine + 4 H(+) = [[Fe-S] cluster scaffold protein] + N(6)-[(R)-dihydrolipoyl]-L-lysyl-[protein] + 4 Fe(3+) + 2 hydrogen sulfide + 2 5'-deoxyadenosine + 2 L-methionine + 2 reduced [2Fe-2S]-[ferredoxin]. Its pathway is protein modification; protein lipoylation via endogenous pathway; protein N(6)-(lipoyl)lysine from octanoyl-[acyl-carrier-protein]: step 2/2. Catalyzes the radical-mediated insertion of two sulfur atoms into the C-6 and C-8 positions of the octanoyl moiety bound to the lipoyl domains of lipoate-dependent enzymes, thereby converting the octanoylated domains into lipoylated derivatives. The polypeptide is Lipoyl synthase (Leptothrix cholodnii (strain ATCC 51168 / LMG 8142 / SP-6) (Leptothrix discophora (strain SP-6))).